The following is a 168-amino-acid chain: N-alpha-acetyltransferase 50 (168 aa).

In terms of domain architecture, N-acetyltransferase spans 5 to 154 (IELGDVTPHN…DAHVLQKSLR (150 aa)). Tyr-30 serves as a coordination point for substrate. The active site involves Tyr-72. Residue Met-74 participates in substrate binding. 76 to 89 (LGCLAPYRRLGIGT) contacts acetyl-CoA. Residue His-111 is part of the active site. Residue 116–125 (NESAIDFYQK) participates in CoA binding. A substrate region spans residues 137–140 (YYKR).

The protein belongs to the acetyltransferase family. GNAT subfamily. Interacts with naa35.

It localises to the cytoplasm. The protein localises to the nucleus. It catalyses the reaction N-terminal L-methionyl-L-alanyl-[protein] + acetyl-CoA = N-terminal N(alpha)-acetyl-L-methionyl-L-alanyl-[protein] + CoA + H(+). It carries out the reaction N-terminal L-methionyl-L-seryl-[protein] + acetyl-CoA = N-terminal N(alpha)-acetyl-L-methionyl-L-seryl-[protein] + CoA + H(+). The enzyme catalyses N-terminal L-methionyl-L-valyl-[protein] + acetyl-CoA = N-terminal N(alpha)-acetyl-L-methionyl-L-valyl-[protein] + CoA + H(+). The catalysed reaction is N-terminal L-methionyl-L-threonyl-[protein] + acetyl-CoA = N-terminal N(alpha)-acetyl-L-methionyl-L-threonyl-[protein] + CoA + H(+). It catalyses the reaction N-terminal L-methionyl-L-lysyl-[protein] + acetyl-CoA = N-terminal N(alpha)-acetyl-L-methionyl-L-lysyl-[protein] + CoA + H(+). It carries out the reaction N-terminal L-methionyl-L-leucyl-[protein] + acetyl-CoA = N-terminal N(alpha)-acetyl-L-methionyl-L-leucyl-[protein] + CoA + H(+). The enzyme catalyses N-terminal L-methionyl-L-phenylalanyl-[protein] + acetyl-CoA = N-terminal N(alpha)-acetyl-L-methionyl-L-phenylalanyl-[protein] + CoA + H(+). The catalysed reaction is N-terminal L-methionyl-L-tyrosyl-[protein] + acetyl-CoA = N-terminal N(alpha)-acetyl-L-methionyl-L-tyrosyl-[protein] + CoA + H(+). Its function is as follows. N-alpha-acetyltransferase that acetylates the N-terminus of proteins that retain their initiating methionine. Has a broad substrate specificity: able to acetylate the initiator methionine of most peptides, except for those with a proline in second position. Also displays N-epsilon-acetyltransferase activity by mediating acetylation of the side chain of specific lysines on proteins. The relevance of N-epsilon-acetyltransferase activity is however unclear. Required for sister chromatid cohesion during mitosis by promoting binding of CDCA5/sororin to cohesin. Essential in embryonic cell proliferation and survival. This is N-alpha-acetyltransferase 50 (naa50) from Danio rerio (Zebrafish).